A 204-amino-acid polypeptide reads, in one-letter code: Probable nicotinate-nucleotide adenylyltransferase (204 aa).

Belongs to the NadD family.

The enzyme catalyses nicotinate beta-D-ribonucleotide + ATP + H(+) = deamido-NAD(+) + diphosphate. It participates in cofactor biosynthesis; NAD(+) biosynthesis; deamido-NAD(+) from nicotinate D-ribonucleotide: step 1/1. Functionally, catalyzes the reversible adenylation of nicotinate mononucleotide (NaMN) to nicotinic acid adenine dinucleotide (NaAD). This is Probable nicotinate-nucleotide adenylyltransferase from Dehalococcoides mccartyi (strain ATCC BAA-2100 / JCM 16839 / KCTC 5957 / BAV1).